We begin with the raw amino-acid sequence, 548 residues long: Probable malate:quinone oxidoreductase (548 aa).

Residues 522-548 (KPQAADSTPKAQLKPQPARKEVADIAL) form a disordered region. Over residues 539-548 (ARKEVADIAL) the composition is skewed to basic and acidic residues.

It belongs to the MQO family. It depends on FAD as a cofactor.

It catalyses the reaction (S)-malate + a quinone = a quinol + oxaloacetate. Its pathway is carbohydrate metabolism; tricarboxylic acid cycle; oxaloacetate from (S)-malate (quinone route): step 1/1. This Escherichia fergusonii (strain ATCC 35469 / DSM 13698 / CCUG 18766 / IAM 14443 / JCM 21226 / LMG 7866 / NBRC 102419 / NCTC 12128 / CDC 0568-73) protein is Probable malate:quinone oxidoreductase.